The following is a 66-amino-acid chain: ATP synthase subunit c (66 aa).

Transmembrane regions (helical) follow at residues 3 to 23 (LTFLGLCIACMGVSVGEGLLM) and 45 to 65 (FLGVAFIEGTFFVTLVFSFII).

This sequence belongs to the ATPase C chain family. As to quaternary structure, F-type ATPases have 2 components, F(1) - the catalytic core - and F(0) - the membrane proton channel. F(1) has five subunits: alpha(3), beta(3), gamma(1), delta(1), epsilon(1). F(0) has three main subunits: a(1), b(2) and c(10-14). The alpha and beta chains form an alternating ring which encloses part of the gamma chain. F(1) is attached to F(0) by a central stalk formed by the gamma and epsilon chains, while a peripheral stalk is formed by the delta and b chains.

It is found in the cell membrane. Functionally, f(1)F(0) ATP synthase produces ATP from ADP in the presence of a proton or sodium gradient. F-type ATPases consist of two structural domains, F(1) containing the extramembraneous catalytic core and F(0) containing the membrane proton channel, linked together by a central stalk and a peripheral stalk. During catalysis, ATP synthesis in the catalytic domain of F(1) is coupled via a rotary mechanism of the central stalk subunits to proton translocation. In terms of biological role, key component of the F(0) channel; it plays a direct role in translocation across the membrane. A homomeric c-ring of between 10-14 subunits forms the central stalk rotor element with the F(1) delta and epsilon subunits. The protein is ATP synthase subunit c of Streptococcus pneumoniae serotype 19F (strain G54).